The following is a 580-amino-acid chain: Microcin-J25 export ATP-binding/permease protein McjD (580 aa).

A run of 6 helical transmembrane segments spans residues 25 to 45, 66 to 86, 143 to 163, 167 to 187, 261 to 281, and 286 to 306; these read FFSM…SPLI, VLLA…VFLF, VSQN…VVLS, WFSA…NTRL, AVIL…NGVV, and FIMI…IGAL. Positions 25 to 312 constitute an ABC transmembrane type-1 domain; it reads FFSMLFITSL…IGALLSEIRQ (288 aa). An ABC transporter domain is found at 345-578; that stretch reads LSIRELSFSY…NEYISGLASV (234 aa). Residue 378–385 coordinates ATP; it reads GPSGSGKS.

This sequence belongs to the ABC transporter superfamily. Homodimer.

The protein localises to the cell inner membrane. In terms of biological role, is able to protect a cell, which harbors the plasmid pTUC100 encoding microcin J25, against microcin J25. Is required for microcin J25 export out of the producing cells. This chain is Microcin-J25 export ATP-binding/permease protein McjD (mcjD), found in Escherichia coli.